The sequence spans 402 residues: Phosphopentomutase (402 aa).

Positions 10, 301, 306, 342, 343, and 354 each coordinate Mn(2+).

It belongs to the phosphopentomutase family. Requires Mn(2+) as cofactor.

Its subcellular location is the cytoplasm. The enzyme catalyses 2-deoxy-alpha-D-ribose 1-phosphate = 2-deoxy-D-ribose 5-phosphate. It carries out the reaction alpha-D-ribose 1-phosphate = D-ribose 5-phosphate. Its pathway is carbohydrate degradation; 2-deoxy-D-ribose 1-phosphate degradation; D-glyceraldehyde 3-phosphate and acetaldehyde from 2-deoxy-alpha-D-ribose 1-phosphate: step 1/2. Isomerase that catalyzes the conversion of deoxy-ribose 1-phosphate (dRib-1-P) and ribose 1-phosphate (Rib-1-P) to deoxy-ribose 5-phosphate (dRib-5-P) and ribose 5-phosphate (Rib-5-P), respectively. The chain is Phosphopentomutase from Aeromonas hydrophila subsp. hydrophila (strain ATCC 7966 / DSM 30187 / BCRC 13018 / CCUG 14551 / JCM 1027 / KCTC 2358 / NCIMB 9240 / NCTC 8049).